The following is a 319-amino-acid chain: HTH-type transcriptional regulator YidZ (319 aa).

The 58-residue stretch at 8–65 (LDLNLLLCLQLLMQERSVTKAAKRMNVTPSAVSKSLAKLRAWFDDPLFVNTPLGLAPT) folds into the HTH lysR-type domain. The segment at residues 25 to 44 (VTKAAKRMNVTPSAVSKSLA) is a DNA-binding region (H-T-H motif).

This sequence belongs to the LysR transcriptional regulatory family.

In terms of biological role, involved in anaerobic NO protection. The sequence is that of HTH-type transcriptional regulator YidZ from Salmonella agona (strain SL483).